The sequence spans 129 residues: Small ribosomal subunit protein uS11 (129 aa).

This sequence belongs to the universal ribosomal protein uS11 family. As to quaternary structure, part of the 30S ribosomal subunit. Interacts with proteins S7 and S18. Binds to IF-3.

In terms of biological role, located on the platform of the 30S subunit, it bridges several disparate RNA helices of the 16S rRNA. Forms part of the Shine-Dalgarno cleft in the 70S ribosome. In Sphingopyxis alaskensis (strain DSM 13593 / LMG 18877 / RB2256) (Sphingomonas alaskensis), this protein is Small ribosomal subunit protein uS11.